Here is a 295-residue protein sequence, read N- to C-terminus: NAD kinase (295 aa).

The active-site Proton acceptor is D74. NAD(+) contacts are provided by residues D74–G75, N148–D149, H159, R176, D178, and T189–S194.

It belongs to the NAD kinase family. Requires a divalent metal cation as cofactor.

Its subcellular location is the cytoplasm. The catalysed reaction is NAD(+) + ATP = ADP + NADP(+) + H(+). Its function is as follows. Involved in the regulation of the intracellular balance of NAD and NADP, and is a key enzyme in the biosynthesis of NADP. Catalyzes specifically the phosphorylation on 2'-hydroxyl of the adenosine moiety of NAD to yield NADP. The chain is NAD kinase from Legionella pneumophila (strain Corby).